The following is a 225-amino-acid chain: MQENSPLLQLQNVGYLAGDAKILNNINFSLRAGEFKLITGPSGCGKSTLLKIVASLISPTSGTLLFEGEDVSTLKPEIYRQQVSYCAQTPTLFGDTVYDNLIFPWQIRNRQPDPAIFLDFLERFALPDSILTKNIAELSGGEKQRISLIRNLQFMPKVLLLDEITSALDESNKHNVNEMIHRYVREQNIAVLWVTHDKDEINHADKVITLQPHAGEMQEARYELA.

The ABC transporter domain occupies 8–225 (LQLQNVGYLA…EMQEARYELA (218 aa)). 40–47 (GPSGCGKS) contributes to the ATP binding site.

The protein belongs to the ABC transporter superfamily. The complex is composed of two ATP-binding proteins (FetA) and two transmembrane proteins (FetB).

It localises to the cell inner membrane. Its function is as follows. Part of the ABC transporter complex FetAB, which is probably involved in iron export and enhances resistance to H(2)O(2)-mediated oxidative stress. Probably responsible for energy coupling to the transport system. This Escherichia coli (strain K12) protein is Probable iron export ATP-binding protein FetA (fetA).